We begin with the raw amino-acid sequence, 480 residues long: tRNA-2-methylthio-N(6)-dimethylallyladenosine synthase (480 aa).

Positions K3–H120 constitute an MTTase N-terminal domain. [4Fe-4S] cluster is bound by residues C12, C49, C83, C157, C161, and C164. Residues K143–R375 form the Radical SAM core domain. The 64-residue stretch at R378–R441 folds into the TRAM domain.

The protein belongs to the methylthiotransferase family. MiaB subfamily. As to quaternary structure, monomer. [4Fe-4S] cluster is required as a cofactor.

It is found in the cytoplasm. The enzyme catalyses N(6)-dimethylallyladenosine(37) in tRNA + (sulfur carrier)-SH + AH2 + 2 S-adenosyl-L-methionine = 2-methylsulfanyl-N(6)-dimethylallyladenosine(37) in tRNA + (sulfur carrier)-H + 5'-deoxyadenosine + L-methionine + A + S-adenosyl-L-homocysteine + 2 H(+). In terms of biological role, catalyzes the methylthiolation of N6-(dimethylallyl)adenosine (i(6)A), leading to the formation of 2-methylthio-N6-(dimethylallyl)adenosine (ms(2)i(6)A) at position 37 in tRNAs that read codons beginning with uridine. The polypeptide is tRNA-2-methylthio-N(6)-dimethylallyladenosine synthase (Colwellia psychrerythraea (strain 34H / ATCC BAA-681) (Vibrio psychroerythus)).